The primary structure comprises 361 residues: Probable dual-specificity RNA methyltransferase RlmN (361 aa).

The active-site Proton acceptor is the E102. One can recognise a Radical SAM core domain in the interval 108-344 (SGDRLTVCVS…VRWSKGLGAD (237 aa)). C115 and C347 form a disulfide bridge. [4Fe-4S] cluster contacts are provided by C122, C126, and C129. S-adenosyl-L-methionine contacts are provided by residues 169–170 (GE), S199, 228–230 (SLH), and N304. C347 (S-methylcysteine intermediate) is an active-site residue.

The protein belongs to the radical SAM superfamily. RlmN family. [4Fe-4S] cluster is required as a cofactor.

The protein localises to the cytoplasm. The enzyme catalyses adenosine(2503) in 23S rRNA + 2 reduced [2Fe-2S]-[ferredoxin] + 2 S-adenosyl-L-methionine = 2-methyladenosine(2503) in 23S rRNA + 5'-deoxyadenosine + L-methionine + 2 oxidized [2Fe-2S]-[ferredoxin] + S-adenosyl-L-homocysteine. It carries out the reaction adenosine(37) in tRNA + 2 reduced [2Fe-2S]-[ferredoxin] + 2 S-adenosyl-L-methionine = 2-methyladenosine(37) in tRNA + 5'-deoxyadenosine + L-methionine + 2 oxidized [2Fe-2S]-[ferredoxin] + S-adenosyl-L-homocysteine. Functionally, specifically methylates position 2 of adenine 2503 in 23S rRNA and position 2 of adenine 37 in tRNAs. The protein is Probable dual-specificity RNA methyltransferase RlmN of Synechococcus elongatus (strain ATCC 33912 / PCC 7942 / FACHB-805) (Anacystis nidulans R2).